A 936-amino-acid polypeptide reads, in one-letter code: Phosphoenolpyruvate carboxylase (936 aa).

Positions 1–20 are disordered; sequence MSSLNLSAGPEPVSERPDDA. Active-site residues include His-164 and Lys-598.

It belongs to the PEPCase type 1 family. The cofactor is Mg(2+).

It catalyses the reaction oxaloacetate + phosphate = phosphoenolpyruvate + hydrogencarbonate. Forms oxaloacetate, a four-carbon dicarboxylic acid source for the tricarboxylic acid cycle. The polypeptide is Phosphoenolpyruvate carboxylase (ppc) (Rhodopseudomonas palustris (strain ATCC BAA-98 / CGA009)).